A 697-amino-acid chain; its full sequence is Glycine--tRNA ligase beta subunit (697 aa).

This sequence belongs to the class-II aminoacyl-tRNA synthetase family. Tetramer of two alpha and two beta subunits.

Its subcellular location is the cytoplasm. It carries out the reaction tRNA(Gly) + glycine + ATP = glycyl-tRNA(Gly) + AMP + diphosphate. This chain is Glycine--tRNA ligase beta subunit, found in Cereibacter sphaeroides (strain ATCC 17023 / DSM 158 / JCM 6121 / CCUG 31486 / LMG 2827 / NBRC 12203 / NCIMB 8253 / ATH 2.4.1.) (Rhodobacter sphaeroides).